We begin with the raw amino-acid sequence, 743 residues long: Probable TonB-dependent siderophore receptor PiuA (743 aa).

Positions 1–28 are cleaved as a signal peptide; that stretch reads MSLIRTRKKIVSSAIASSLSMIATTAMA. In terms of domain architecture, TBDR plug spans 61 to 167; that stretch reads PLLDTPKSVS…VGGSINMISK (107 aa). A TBDR beta-barrel domain is found at 172-743; it reads GDFLEGSVAA…SAVLAVNFKY (572 aa). 2 disulfides stabilise this stretch: C408/C416 and C627/C632.

It belongs to the TonB-dependent receptor family.

It localises to the cell outer membrane. In terms of biological role, probably involved in the initial step of iron uptake by binding iron chelating siderophores, thereby allowing extraction of iron from the environment. May bind the siderophore, ferric enterobactin, with micromolar affinity. This Acinetobacter baumannii (strain ATCC 19606 / DSM 30007 / JCM 6841 / CCUG 19606 / CIP 70.34 / NBRC 109757 / NCIMB 12457 / NCTC 12156 / 81) protein is Probable TonB-dependent siderophore receptor PiuA.